We begin with the raw amino-acid sequence, 636 residues long: Threonine--tRNA ligase (636 aa).

In terms of domain architecture, TGS spans 1 to 60; the sequence is MPIINFNNKEILFNYPISIIEIIKKFDKNLSENCIAAKINGKLLDVSEIINYDGSLELVK. The interval 242 to 533 is catalytic; the sequence is DHRKIGKKLD…ITEEFSGKYP (292 aa). The Zn(2+) site is built by Cys333, His384, and His510.

It belongs to the class-II aminoacyl-tRNA synthetase family. As to quaternary structure, homodimer. Requires Zn(2+) as cofactor.

It localises to the cytoplasm. The enzyme catalyses tRNA(Thr) + L-threonine + ATP = L-threonyl-tRNA(Thr) + AMP + diphosphate + H(+). Functionally, catalyzes the attachment of threonine to tRNA(Thr) in a two-step reaction: L-threonine is first activated by ATP to form Thr-AMP and then transferred to the acceptor end of tRNA(Thr). Also edits incorrectly charged L-seryl-tRNA(Thr). This is Threonine--tRNA ligase from Wigglesworthia glossinidia brevipalpis.